The following is a 433-amino-acid chain: uncharacterized protein (433 aa).

The tract at residues 1 to 126 (MAAHIALIAH…VIKLLGKTKT (126 aa)) is methylglyoxal synthase. Residues 1-145 (MAAHIALIAH…GQGNVERELD (145 aa)) form the MGS-like domain. Asp62 is a catalytic residue. Residues 127–262 (GHLIFNPVAG…VDTALCNDIP (136 aa)) enclose the DAGKc domain.

In the N-terminal section; belongs to the methylglyoxal synthase family.

This is an uncharacterized protein from Synechocystis sp. (strain ATCC 27184 / PCC 6803 / Kazusa).